The chain runs to 211 residues: MANSGLQLLGFSMAMLGWVGLIASTAIPQWQMSSYAGDNIITAQAMYKGLWMECVTQSTGMMSCKMYDSVLALPGALQATRALMVVSLVLGFLAMFVATMGMKCTRCGGDDKAKKARIAMTGGIVFIVAGLAALVACSWIGHQIVTDFYNPLTPMNVKYEFGPAIFIGWAGSALVLLGGALLSCSCPGSESKAAYRAPRSYPKSNSSKEYV.

Topologically, residues 1-7 (MANSGLQ) are cytoplasmic. Residues 8 to 28 (LLGFSMAMLGWVGLIASTAIP) form a helical membrane-spanning segment. Over 29–81 (QWQMSSYAGDNIITAQAMYKGLWMECVTQSTGMMSCKMYDSVLALPGALQATR) the chain is Extracellular. The helical transmembrane segment at 82–102 (ALMVVSLVLGFLAMFVATMGM) threads the bilayer. Over 103-119 (KCTRCGGDDKAKKARIA) the chain is Cytoplasmic. The helical transmembrane segment at 120–140 (MTGGIVFIVAGLAALVACSWI) threads the bilayer. Residues 141-160 (GHQIVTDFYNPLTPMNVKYE) are Extracellular-facing. A helical membrane pass occupies residues 161–181 (FGPAIFIGWAGSALVLLGGAL). At 182–211 (LSCSCPGSESKAAYRAPRSYPKSNSSKEYV) the chain is on the cytoplasmic side. An interactions with TJP1, TJP2 and TJP3 region spans residues 210 to 211 (YV).

It belongs to the claudin family. As to quaternary structure, directly interacts with TJP1/ZO-1, TJP2/ZO-2 and TJP3/ZO-3. The phosphorylated form interacts with EPCAM. Phosphorylated. Expressed predominantly in lung and kidney.

Its subcellular location is the cell membrane. The protein localises to the basolateral cell membrane. The protein resides in the cell junction. It is found in the tight junction. In terms of biological role, plays a major role in tight junction-specific obliteration of the intercellular space, through calcium-independent cell-adhesion activity. The polypeptide is Claudin-7 (Cldn7) (Mus musculus (Mouse)).